Reading from the N-terminus, the 485-residue chain is Serine hydroxymethyltransferase, mitochondrial (485 aa).

K259 bears the N6-(pyridoxal phosphate)lysine mark.

Belongs to the SHMT family. Homotetramer. Requires pyridoxal 5'-phosphate as cofactor.

It localises to the mitochondrion. It catalyses the reaction (6R)-5,10-methylene-5,6,7,8-tetrahydrofolate + glycine + H2O = (6S)-5,6,7,8-tetrahydrofolate + L-serine. Its pathway is one-carbon metabolism; tetrahydrofolate interconversion. Its function is as follows. Interconversion of serine and glycine. This Candida glabrata (strain ATCC 2001 / BCRC 20586 / JCM 3761 / NBRC 0622 / NRRL Y-65 / CBS 138) (Yeast) protein is Serine hydroxymethyltransferase, mitochondrial (SHM1).